The chain runs to 215 residues: Large ribosomal subunit protein uL3 (215 aa).

At Gln-151 the chain carries N5-methylglutamine.

Belongs to the universal ribosomal protein uL3 family. Part of the 50S ribosomal subunit. Forms a cluster with proteins L14 and L19. Methylated by PrmB.

In terms of biological role, one of the primary rRNA binding proteins, it binds directly near the 3'-end of the 23S rRNA, where it nucleates assembly of the 50S subunit. The sequence is that of Large ribosomal subunit protein uL3 from Rickettsia massiliae (strain Mtu5).